Here is a 501-residue protein sequence, read N- to C-terminus: Cytokinin dehydrogenase 2 (501 aa).

Positions 1 to 22 are cleaved as a signal peptide; that stretch reads MANLRLMITLITVLMITKSSNG. N-linked (GlcNAc...) asparagine glycosylation is found at Asn32 and Asn51. Residues 53–226 enclose the FAD-binding PCMH-type domain; the sequence is TTVTPGGVIC…TRARIVLDHA (174 aa). Positions 87, 89, and 91 each coordinate FAD. His92 is subject to Pros-8alpha-FAD histidine. FAD-binding residues include Ser93 and Gln97. N-linked (GlcNAc...) asparagine glycosylation occurs at Asn107. Residues Asp150, Thr155, Ser161, Ile165, Ile216, Tyr460, Ser495, and Gln498 each contribute to the FAD site.

This sequence belongs to the oxygen-dependent FAD-linked oxidoreductase family. Requires FAD as cofactor. In terms of tissue distribution, expressed in the shoot apex, in stipules, and occasionally in the most apical part of the inflorescence stems. Not detected in roots.

Its subcellular location is the endoplasmic reticulum. It is found in the secreted. The protein localises to the extracellular space. The catalysed reaction is N(6)-dimethylallyladenine + A + H2O = 3-methyl-2-butenal + adenine + AH2. In terms of biological role, catalyzes the oxidation of cytokinins, a family of N(6)-substituted adenine derivatives that are plant hormones, where the substituent is an isopentenyl group. Modulates asymmetric cytokinin signaling in emerged lateral roots. Its activity determines cell elongation and number in emerged lateral roots and defines angular growth of lateral roots. This is Cytokinin dehydrogenase 2 (CKX2) from Arabidopsis thaliana (Mouse-ear cress).